A 520-amino-acid polypeptide reads, in one-letter code: Cytochrome P450 monooxygenase TRI4 (520 aa).

A helical membrane pass occupies residues 10–30 (LVNIPISHAVGVVAASTVIYF). Asparagine 447 carries N-linked (GlcNAc...) asparagine glycosylation. Heme is bound at residue cysteine 455.

The protein belongs to the cytochrome P450 family. It depends on heme as a cofactor.

It is found in the membrane. Its pathway is sesquiterpene biosynthesis; trichothecene biosynthesis. Its function is as follows. Cytochrome P450 monooxygenase; part of the core gene cluster that mediates the biosynthesis of trichothecenes, a very large family of chemically related bicyclic sesquiterpene compounds acting as mycotoxins, including T2-toxin. The biosynthesis of trichothecenes begins with the cyclization of farnesyl diphosphate to trichodiene and is catalyzed by the trichodiene synthase TRI5. Trichodiene undergoes a series of oxygenations catalyzed by the cytochrome P450 monooxygenase TRI4. TRI4 controls the addition of four oxygens at C-2, C-3, C-11, and the C-12, C-13-epoxide to form the intermediate isotrichotriol. Isotrichotriol then undergoes a non-enzymatic isomerization and cyclization to form isotrichodermol. During this process, the oxygen at the C-2 position becomes the pyran ring oxygen and the hydroxyl group at C-11 is lost. More complex type A trichothecenes are built by modifying isotrichodermol through a series of paired hydroxylation and acetylation or acylation steps. Isotrichodermol is converted to isotrichodermin by the acetyltransferase TRI101. TRI101 encodes a C-3 transacetylase that acts as a self-protection or resistance factor during biosynthesis and that the presence of a free C-3 hydroxyl group is a key component of Fusarium trichothecene phytotoxicity. A second hydroxyl group is added to C-15 by the trichothecene C-15 hydroxylase TRI11, producing 15-decalonectrin, which is then acetylated by TRI3, producing calonectrin. A third hydroxyl group is added at C-4 by the cytochrome P450 monooxygenase TRI13, converting calonectrin to 3,15-diacetoxyspirpenol, which is subsequently acetylated by the acetyltransferase TRI7. A fourth hydroxyl group is added to C-8 by the cytochrome P450 monooxygenase TRI1, followed by the addition of an isovaleryl moiety by TRI16. Finally, the acetyl group is removed from the C-3 position by the trichothecene C-3 esterase TRI8 to produce T-2 toxin. The sequence is that of Cytochrome P450 monooxygenase TRI4 from Fusarium sporotrichioides.